The primary structure comprises 430 residues: Adenylosuccinate synthetase (430 aa).

Residues 13–19 and 41–43 each bind GTP; these read GDEGKGK and GHT. Aspartate 14 acts as the Proton acceptor in catalysis. 2 residues coordinate Mg(2+): aspartate 14 and glycine 41. Residues 14 to 17, 39 to 42, threonine 130, arginine 144, glutamine 225, threonine 240, and arginine 304 each bind IMP; these read DEGK and NAGH. Residue histidine 42 is the Proton donor of the active site. 300 to 306 contacts substrate; the sequence is ATTGRKR. GTP contacts are provided by residues arginine 306, 332–334, and 414–416; these read KLD and STG.

It belongs to the adenylosuccinate synthetase family. As to quaternary structure, homodimer. Requires Mg(2+) as cofactor.

The protein localises to the cytoplasm. It catalyses the reaction IMP + L-aspartate + GTP = N(6)-(1,2-dicarboxyethyl)-AMP + GDP + phosphate + 2 H(+). The protein operates within purine metabolism; AMP biosynthesis via de novo pathway; AMP from IMP: step 1/2. In terms of biological role, plays an important role in the de novo pathway of purine nucleotide biosynthesis. Catalyzes the first committed step in the biosynthesis of AMP from IMP. The chain is Adenylosuccinate synthetase from Teredinibacter turnerae (strain ATCC 39867 / T7901).